The following is a 384-amino-acid chain: tRNA-specific 2-thiouridylase MnmA (384 aa).

Residues 13–20 and M39 each bind ATP; that span reads GLSGGVDS. The interval 99-101 is interaction with target base in tRNA; that stretch reads NPD. The active-site Nucleophile is the C104. Cysteines 104 and 215 form a disulfide. G128 provides a ligand contact to ATP. Residues 165-167 are interaction with tRNA; the sequence is KDQ. The Cysteine persulfide intermediate role is filled by C215. Residues 333-334 are interaction with tRNA; that stretch reads RY.

Belongs to the MnmA/TRMU family.

Its subcellular location is the cytoplasm. It catalyses the reaction S-sulfanyl-L-cysteinyl-[protein] + uridine(34) in tRNA + AH2 + ATP = 2-thiouridine(34) in tRNA + L-cysteinyl-[protein] + A + AMP + diphosphate + H(+). Its function is as follows. Catalyzes the 2-thiolation of uridine at the wobble position (U34) of tRNA, leading to the formation of s(2)U34. This chain is tRNA-specific 2-thiouridylase MnmA, found in Albidiferax ferrireducens (strain ATCC BAA-621 / DSM 15236 / T118) (Rhodoferax ferrireducens).